The sequence spans 264 residues: Potassium channel regulatory protein (264 aa).

In terms of domain architecture, BTB spans 5–74; sequence DLVTLNVGGR…LRNHELLLPS (70 aa).

Can form homooligomers. Interacts with KCNA1 (via cytoplasmic N-terminal domain) and KCNA4.

The protein localises to the endoplasmic reticulum. Inhibits potassium fluxes in cells. May regulate Kv1 family channel proteins by retaining a fraction of channels in endomembranes. The chain is Potassium channel regulatory protein (Kcnrg) from Mus musculus (Mouse).